The sequence spans 388 residues: Chorismate synthase (388 aa).

NADP(+)-binding residues include Arg39 and Arg45. Residues 130 to 132 (RSS), 251 to 252 (NA), Gly296, 311 to 315 (KPIPT), and Arg337 contribute to the FMN site.

It belongs to the chorismate synthase family. As to quaternary structure, homotetramer. FMNH2 serves as cofactor.

The catalysed reaction is 5-O-(1-carboxyvinyl)-3-phosphoshikimate = chorismate + phosphate. It participates in metabolic intermediate biosynthesis; chorismate biosynthesis; chorismate from D-erythrose 4-phosphate and phosphoenolpyruvate: step 7/7. Its function is as follows. Catalyzes the anti-1,4-elimination of the C-3 phosphate and the C-6 proR hydrogen from 5-enolpyruvylshikimate-3-phosphate (EPSP) to yield chorismate, which is the branch point compound that serves as the starting substrate for the three terminal pathways of aromatic amino acid biosynthesis. This reaction introduces a second double bond into the aromatic ring system. The polypeptide is Chorismate synthase (Streptococcus suis (strain 98HAH33)).